A 381-amino-acid polypeptide reads, in one-letter code: DNA replication and repair protein RecF (381 aa).

30 to 37 (GENAQGKT) contacts ATP.

The protein belongs to the RecF family.

The protein resides in the cytoplasm. Functionally, the RecF protein is involved in DNA metabolism; it is required for DNA replication and normal SOS inducibility. RecF binds preferentially to single-stranded, linear DNA. It also seems to bind ATP. The sequence is that of DNA replication and repair protein RecF from Lactobacillus delbrueckii subsp. bulgaricus (strain ATCC BAA-365 / Lb-18).